A 1379-amino-acid chain; its full sequence is ATPase histone chaperone YTA7 (1379 aa).

Disordered regions lie at residues 1-39 (MARN…TTTR) and 54-243 (DFLE…NSRN). Position 2 is an N-acetylalanine (Ala2). Residues Ser11 and Ser17 each carry the phosphoserine modification. A compositionally biased stretch (basic and acidic residues) spans 61–78 (VMDKDETPVDVTSDEHHN). Position 94 is a phosphoserine (Ser94). Residues 97 to 110 (ENARTNEELTNERN) are compositionally biased toward basic and acidic residues. Composition is skewed to acidic residues over residues 119–152 (PEED…DEDS) and 170–184 (DPDD…DEEG). A compositionally biased stretch (basic residues) spans 192–207 (SSKRLKRANSRRTRSS). Position 212 is a phosphothreonine (Thr212). Positions 218–228 (RALRSRTRHSR) are enriched in basic residues. Thr229 carries the phosphothreonine modification. Residues Ser241, Ser259, and Ser285 each carry the phosphoserine modification. Residues 302–330 (NPSPARRGRGGWNASQNSGPTRRLFPTGG) form a disordered region. Phosphoserine is present on residues Ser367, Ser369, and Ser370. A disordered region spans residues 375–396 (LPLGVTPKTKKENTQKKKKKKP). The interval 450–578 (VLFHGPPGTG…PALRRPGRFD (129 aa)) is AAA-ATPase; required for its chromatin boundary function. Residue 454 to 461 (GPPGTGKT) coordinates ATP. Position 735 is a phosphoserine (Ser735). One can recognise a Bromo domain in the interval 974 to 1101 (RLKNVLKIKL…ANAQMGIEEI (128 aa)). Ser1142 is modified (phosphoserine). Disordered stretches follow at residues 1233–1274 (TCTS…ANTN) and 1291–1316 (LHET…GKKS). A compositionally biased stretch (basic and acidic residues) spans 1244–1254 (ERARKEPKENE). Ser1256 bears the Phosphoserine mark. Over residues 1256–1274 (SLQTQVTEENFSKIDANTN) the composition is skewed to polar residues. Basic and acidic residues predominate over residues 1293–1316 (ETVEKRERSPIPKEVVEPEQGKKS).

It belongs to the AAA ATPase family. Interacts with CSE4/CENP-A. Interacts with SCM3. Interacts with SPT16. Interacts with POB3. Interacts with the casein kinase II complex subunits CKA1, CKA2, CKB1 and CKB2. Interacts with RNA polymerase II. Interacts (via Bromo domain) with histone H3. Interacts (via Bromo domain) with histone H4. Post-translationally, phosphorylated by CDK1 and casein kinase II during S-phase, which leads to its eviction from histone gene promoters and promotes histone gene transcription.

Its subcellular location is the chromosome. The protein localises to the centromere. The protein resides in the nucleus. Functions as an ATP-dependent nucleosome disassembly factor that helps evict canonical histone H3 from the 5'-end of genes upon their induction. Also contributes to kinetochore assembly by cooperating with SCM3 to load the histone H3 variant CSE4/CENP-A at centromeres. Provides a chromatin boundary function at the 5'-end of genes that restricts access by RTT106 and thus prevents ectopic spreading of repressive chromatin into coding regions. Also prevents heterochromatin spreading downstream of the silent mating-type locus HMR, this function is independent of the tRNA boundary element. Contributes to appropriate cell cycle regulation of histone gene expression by recruiting RNA polymerase II to histone genes, and subsequent CDK1- and casein kinase II-dependent eviction from chromatin is required to promote transcriptional elongation. The chain is ATPase histone chaperone YTA7 from Saccharomyces cerevisiae (strain ATCC 204508 / S288c) (Baker's yeast).